A 401-amino-acid polypeptide reads, in one-letter code: Alpha-(1,4)-fucosyltransferase (401 aa).

Topologically, residues M1–R4 are cytoplasmic. A helical; Signal-anchor for type II membrane protein transmembrane segment spans residues Y5 to I27. Topologically, residues L28–V401 are lumenal. A glycan (N-linked (GlcNAc...) asparagine) is linked at N85.

It belongs to the glycosyltransferase 10 family. Present in root, stem, flower buds and green siliques.

Its subcellular location is the golgi apparatus. The protein localises to the golgi stack membrane. Its pathway is protein modification; protein glycosylation. May be involved in cell wall synthesis. Catalyzes alpha-1,4 glycosidic linkages and generates Lewis-a epitopes. The chain is Alpha-(1,4)-fucosyltransferase (FUT13) from Arabidopsis thaliana (Mouse-ear cress).